The following is a 495-amino-acid chain: Alkaline protease 2 (495 aa).

The signal sequence occupies residues 1–16 (MKGYLSLSILPLLVAA). Residues 17 to 136 (SPVVVDSIHN…IEKDSEVHTM (120 aa)) constitute a propeptide that is removed on maturation. An Inhibitor I9 domain is found at 43-136 (SYIVVFKKHV…IEKDSEVHTM (94 aa)). In terms of domain architecture, Peptidase S8 spans 146-452 (PWGLARISHR…GGSSNYTDII (307 aa)). Residues Asp182 and His214 each act as charge relay system in the active site. N-linked (GlcNAc...) asparagine glycosylation is present at Asn284. The Charge relay system role is filled by Ser380. Residues Asn447 and Asn460 are each glycosylated (N-linked (GlcNAc...) asparagine).

It belongs to the peptidase S8 family.

The catalysed reaction is Hydrolysis of proteins with broad specificity, and of Bz-Arg-OEt &gt; Ac-Tyr-OEt. Does not hydrolyze peptide amides.. In terms of biological role, alkaline protease that allows assimilation of proteinaceous substrates. Acts as a significant virulence factor in invasive aspergillosis. Required for regular sporulation. The sequence is that of Alkaline protease 2 (alp2) from Aspergillus fumigatus (strain CBS 144.89 / FGSC A1163 / CEA10) (Neosartorya fumigata).